Reading from the N-terminus, the 267-residue chain is REH2-associated factor 2 (267 aa).

As to quaternary structure, component of the REH2-associated complex (REH2C) composed of helicase REH2, associated factors H2F1 and H2F2, and mRNAs at various editing stages; the formation of the complex is RNA-independent. Interacts with various editing complexes including the RNA editing core (RECC) complex, the gRNA-binding (GRBC) complex (also known as the MRB1 complex) and the RNA editing mediator (REMC) complex.

Its subcellular location is the mitochondrion. Its function is as follows. May play a role in mitochondrial mRNA editing by facilitating the association of the gRNA-binding (GRBC) complex with the RNA editing core (RECC) complex. However, appears to be dispensable for mRNA editing per se. The sequence is that of REH2-associated factor 2 from Trypanosoma brucei brucei (strain 927/4 GUTat10.1).